Here is a 624-residue protein sequence, read N- to C-terminus: Protein FAM234B (624 aa).

Residues 1 to 91 (MATVLSRALK…GFPSEPLGGL (91 aa)) form a disordered region. The residue at position 16 (serine 16) is a Phosphoserine. Threonine 26 is subject to Phosphothreonine. Phosphoserine is present on residues serine 30, serine 33, and serine 63. A helical transmembrane segment spans residues 107 to 127 (VFLLTLVISMVLVLLCAFLIP).

It belongs to the FAM234 family.

It is found in the membrane. Its subcellular location is the golgi outpost. The protein localises to the cytoplasm. It localises to the cytoskeleton. The protein resides in the microtubule organizing center. This Mus musculus (Mouse) protein is Protein FAM234B.